Here is a 63-residue protein sequence, read N- to C-terminus: Large ribosomal subunit protein bL28 (63 aa).

Belongs to the bacterial ribosomal protein bL28 family.

This Clostridium beijerinckii (strain ATCC 51743 / NCIMB 8052) (Clostridium acetobutylicum) protein is Large ribosomal subunit protein bL28.